Here is a 201-residue protein sequence, read N- to C-terminus: 5'(3')-deoxyribonucleotidase, cytosolic type (201 aa).

D10 serves as the catalytic Nucleophile. 2 residues coordinate Mg(2+): D10 and D12. Residue D12 is the Proton donor of the active site. Residues F18, F44, Y65, T99, and K134 each contribute to the substrate site. A Mg(2+)-binding site is contributed by D145. S182 carries the post-translational modification Phosphoserine.

It belongs to the 5'(3')-deoxyribonucleotidase family. As to quaternary structure, homodimer. The cofactor is Mg(2+). In terms of tissue distribution, detected in skeletal muscle, heart and pancreas.

The protein localises to the cytoplasm. Dephosphorylates the 5' and 2'(3')-phosphates of deoxyribonucleotides, with a preference for dUMP and dTMP, intermediate activity towards dGMP, and low activity towards dCMP and dAMP. The protein is 5'(3')-deoxyribonucleotidase, cytosolic type (NT5C) of Homo sapiens (Human).